A 940-amino-acid chain; its full sequence is Insulin receptor substrate 1 (940 aa).

In terms of domain architecture, PH spans 8-109 (GMVLSGYHKK…WLDKLLLLQR (102 aa)). The region spanning 122–236 (YEHVWQVIIQ…SAMSAKTDSN (115 aa)) is the IRS-type PTB domain. Phosphoserine is present on residues Ser-284, Ser-285, and Ser-340. Residue Tyr-407 is modified to Phosphotyrosine; by INSR. The YXXM motif 1 signature appears at 407–410 (YIPM). Residues 523-540 (NRSQNNISKEGPISGTST) show a composition bias toward polar residues. Positions 523 to 549 (NRSQNNISKEGPISGTSTNREKKSTSA) are disordered. Phosphoserine is present on Ser-548. Positions 639-642 (YLEM) match the YXXM motif 2 motif. The residue at position 883 (Tyr-883) is a Phosphotyrosine; by INSR. The disordered stretch occupies residues 895–915 (NPAKYLKRGSRESPPVATCAE). Ser-904 and Ser-907 each carry phosphoserine. Tyr-920 carries the phosphotyrosine; by INSR modification.

Bindings to phosphatidylinositol 3-kinase and SHP2.

Functionally, activates phosphatidylinositol 3-kinase when bound to the regulatory p85 subunit. May mediate the control of various cellular processes by insulin-like peptides. When phosphorylated by the insulin receptor binds specifically to various cellular proteins containing SH2 domains. Involved in control of cell proliferation, cell size, and body and organ growth throughout development. Also has a role in a signaling pathway controlling the physiological response required to endure periods of low nutrient conditions. Insulin/insulin-like growth factor (IGF) signaling pathway has a role in regulating aging and is necessary in the ovary for vitellogenic maturation. The polypeptide is Insulin receptor substrate 1 (Drosophila ananassae (Fruit fly)).